A 296-amino-acid polypeptide reads, in one-letter code: NAD kinase (296 aa).

D72 (proton acceptor) is an active-site residue. Residues 72–73 (DG), 146–147 (ND), R157, K174, D176, 187–192 (TAYALS), and Q247 each bind NAD(+).

Belongs to the NAD kinase family. A divalent metal cation serves as cofactor.

The protein resides in the cytoplasm. It carries out the reaction NAD(+) + ATP = ADP + NADP(+) + H(+). Involved in the regulation of the intracellular balance of NAD and NADP, and is a key enzyme in the biosynthesis of NADP. Catalyzes specifically the phosphorylation on 2'-hydroxyl of the adenosine moiety of NAD to yield NADP. This chain is NAD kinase, found in Pseudomonas savastanoi pv. phaseolicola (strain 1448A / Race 6) (Pseudomonas syringae pv. phaseolicola (strain 1448A / Race 6)).